Here is a 163-residue protein sequence, read N- to C-terminus: Phosphopantetheine adenylyltransferase (163 aa).

S11 lines the substrate pocket. ATP-binding positions include 11–12 (SF) and H19. Residues K43, A76, and R90 each contribute to the substrate site. ATP-binding positions include 91-93 (GLR), E101, and 126-132 (WQALSSS).

This sequence belongs to the bacterial CoaD family. In terms of assembly, homohexamer. The cofactor is Mg(2+).

It localises to the cytoplasm. It carries out the reaction (R)-4'-phosphopantetheine + ATP + H(+) = 3'-dephospho-CoA + diphosphate. It functions in the pathway cofactor biosynthesis; coenzyme A biosynthesis; CoA from (R)-pantothenate: step 4/5. In terms of biological role, reversibly transfers an adenylyl group from ATP to 4'-phosphopantetheine, yielding dephospho-CoA (dPCoA) and pyrophosphate. In Streptococcus pyogenes serotype M2 (strain MGAS10270), this protein is Phosphopantetheine adenylyltransferase.